Reading from the N-terminus, the 224-residue chain is Cytidylate kinase (224 aa).

Position 11–19 (11–19 (GPAAAGKST)) interacts with ATP.

The protein belongs to the cytidylate kinase family. Type 1 subfamily.

The protein localises to the cytoplasm. The catalysed reaction is CMP + ATP = CDP + ADP. It catalyses the reaction dCMP + ATP = dCDP + ADP. The sequence is that of Cytidylate kinase from Geobacillus sp. (strain WCH70).